The primary structure comprises 35 residues: Photosystem II reaction center protein T (35 aa).

Residues 3–23 (ALVYTFLLVGTLGIIFFAIFF) traverse the membrane as a helical segment.

The protein belongs to the PsbT family. As to quaternary structure, PSII is composed of 1 copy each of membrane proteins PsbA, PsbB, PsbC, PsbD, PsbE, PsbF, PsbH, PsbI, PsbJ, PsbK, PsbL, PsbM, PsbT, PsbY, PsbZ, Psb30/Ycf12, at least 3 peripheral proteins of the oxygen-evolving complex and a large number of cofactors. It forms dimeric complexes.

The protein resides in the plastid. Its subcellular location is the chloroplast thylakoid membrane. In terms of biological role, found at the monomer-monomer interface of the photosystem II (PS II) dimer, plays a role in assembly and dimerization of PSII. PSII is a light-driven water plastoquinone oxidoreductase, using light energy to abstract electrons from H(2)O, generating a proton gradient subsequently used for ATP formation. The sequence is that of Photosystem II reaction center protein T from Marchantia polymorpha (Common liverwort).